The chain runs to 525 residues: GMP synthase [glutamine-hydrolyzing] (525 aa).

Residues 9 to 207 (RILILDFGSQ…VRDICQCEAL (199 aa)) form the Glutamine amidotransferase type-1 domain. Cys86 serves as the catalytic Nucleophile. Active-site residues include His181 and Glu183. The region spanning 208-400 (WTPAKIIDDA…LGLPYDMLYR (193 aa)) is the GMPS ATP-PPase domain. 235–241 (SGGVDSS) lines the ATP pocket.

Homodimer.

The enzyme catalyses XMP + L-glutamine + ATP + H2O = GMP + L-glutamate + AMP + diphosphate + 2 H(+). It participates in purine metabolism; GMP biosynthesis; GMP from XMP (L-Gln route): step 1/1. Its function is as follows. Catalyzes the synthesis of GMP from XMP. This is GMP synthase [glutamine-hydrolyzing] from Shigella dysenteriae serotype 1 (strain Sd197).